The primary structure comprises 248 residues: ATP synthase subunit a (248 aa).

5 helical membrane-spanning segments follow: residues 31–51 (GQVL…VLLG), 90–110 (VPYV…GNLF), 129–149 (INTT…AGIS), 195–215 (VIAV…MILF), and 216–236 (LFTG…YIGE).

The protein belongs to the ATPase A chain family. In terms of assembly, F-type ATPases have 2 components, CF(1) - the catalytic core - and CF(0) - the membrane proton channel. CF(1) has five subunits: alpha(3), beta(3), gamma(1), delta(1), epsilon(1). CF(0) has four main subunits: a, b, b' and c.

It is found in the cellular thylakoid membrane. Its function is as follows. Key component of the proton channel; it plays a direct role in the translocation of protons across the membrane. In Synechococcus sp. (strain JA-3-3Ab) (Cyanobacteria bacterium Yellowstone A-Prime), this protein is ATP synthase subunit a.